Here is a 172-residue protein sequence, read N- to C-terminus: Crossover junction endodeoxyribonuclease RuvC (172 aa).

Residues aspartate 12, glutamate 71, and aspartate 143 contribute to the active site. Mg(2+)-binding residues include aspartate 12, glutamate 71, and aspartate 143.

The protein belongs to the RuvC family. As to quaternary structure, homodimer which binds Holliday junction (HJ) DNA. The HJ becomes 2-fold symmetrical on binding to RuvC with unstacked arms; it has a different conformation from HJ DNA in complex with RuvA. In the full resolvosome a probable DNA-RuvA(4)-RuvB(12)-RuvC(2) complex forms which resolves the HJ. Mg(2+) is required as a cofactor.

Its subcellular location is the cytoplasm. It catalyses the reaction Endonucleolytic cleavage at a junction such as a reciprocal single-stranded crossover between two homologous DNA duplexes (Holliday junction).. The RuvA-RuvB-RuvC complex processes Holliday junction (HJ) DNA during genetic recombination and DNA repair. Endonuclease that resolves HJ intermediates. Cleaves cruciform DNA by making single-stranded nicks across the HJ at symmetrical positions within the homologous arms, yielding a 5'-phosphate and a 3'-hydroxyl group; requires a central core of homology in the junction. The consensus cleavage sequence is 5'-(A/T)TT(C/G)-3'. Cleavage occurs on the 3'-side of the TT dinucleotide at the point of strand exchange. HJ branch migration catalyzed by RuvA-RuvB allows RuvC to scan DNA until it finds its consensus sequence, where it cleaves and resolves the cruciform DNA. The chain is Crossover junction endodeoxyribonuclease RuvC from Coxiella burnetii (strain CbuK_Q154) (Coxiella burnetii (strain Q154)).